A 500-amino-acid chain; its full sequence is L-arabinose isomerase (500 aa).

Residues E306, E333, H350, and H450 each contribute to the Mn(2+) site.

Belongs to the arabinose isomerase family. In terms of assembly, homohexamer. The cofactor is Mn(2+).

The enzyme catalyses beta-L-arabinopyranose = L-ribulose. The protein operates within carbohydrate degradation; L-arabinose degradation via L-ribulose; D-xylulose 5-phosphate from L-arabinose (bacterial route): step 1/3. In terms of biological role, catalyzes the conversion of L-arabinose to L-ribulose. This is L-arabinose isomerase from Escherichia coli O6:H1 (strain CFT073 / ATCC 700928 / UPEC).